A 98-amino-acid chain; its full sequence is Acylphosphatase-1 (98 aa).

The Acylphosphatase-like domain occupies 8–98 (SVDYEVFGKV…LEHSTFSICK (91 aa)). Active-site residues include arginine 23 and asparagine 41.

This sequence belongs to the acylphosphatase family.

The catalysed reaction is an acyl phosphate + H2O = a carboxylate + phosphate + H(+). The polypeptide is Acylphosphatase-1 (acyp1) (Xenopus tropicalis (Western clawed frog)).